The chain runs to 219 residues: Histone H1.01 (219 aa).

Low complexity-rich tracts occupy residues 1–19 (MSETAPAAAPDAPAPGAKA) and 27–39 (AAGGAKARKPAGP). 2 disordered regions span residues 1–40 (MSETAPAAAPDAPAPGAKAAAKKPKKAAGGAKARKPAGPS) and 94–219 (LVQT…AKKK). N-acetylserine is present on Ser-2. The region spanning 37 to 110 (AGPSVTELIT…GASGSFRLNK (74 aa)) is the H15 domain. Composition is skewed to basic residues over residues 119–134 (APRKRATAAKPKKPAA), 142–159 (KKPKKAAAVKKSPKKAKK), 167–185 (KAAKSPKKAAKAGRPKKAA), and 192–219 (KAVKPKAAKPKATKPKAAKAKKTAAKKK).

Belongs to the histone H1/H5 family.

The protein resides in the nucleus. The protein localises to the chromosome. Functionally, histones H1 are necessary for the condensation of nucleosome chains into higher-order structures. In Gallus gallus (Chicken), this protein is Histone H1.01.